A 71-amino-acid chain; its full sequence is DNA gyrase inhibitor YacG (71 aa).

The Zn(2+) site is built by cysteine 8, cysteine 11, cysteine 27, and cysteine 31. The tract at residues 48 to 71 is disordered; it reads VVEDDDLPPDAPGGESGGASGRLN. Residues 61 to 71 show a composition bias toward gly residues; it reads GESGGASGRLN.

It belongs to the DNA gyrase inhibitor YacG family. Interacts with GyrB. The cofactor is Zn(2+).

Its function is as follows. Inhibits all the catalytic activities of DNA gyrase by preventing its interaction with DNA. Acts by binding directly to the C-terminal domain of GyrB, which probably disrupts DNA binding by the gyrase. This chain is DNA gyrase inhibitor YacG, found in Ralstonia nicotianae (strain ATCC BAA-1114 / GMI1000) (Ralstonia solanacearum).